Reading from the N-terminus, the 78-residue chain is Toxin OAIP 5 (78 aa).

The signal sequence occupies residues 1–19 (MLIVILTCALLVIYHAAAA). Residues 20–40 (EELEAKDVIESKALATLDEER) constitute a propeptide that is removed on maturation. 3 disulfide bridges follow: Cys43–Cys56, Cys47–Cys70, and Cys64–Cys75.

It belongs to the neurotoxin 12 (Hwtx-2) family. 05 (OAIP-5) subfamily. As to expression, expressed by the venom gland.

Its subcellular location is the secreted. In terms of biological role, probable ion channel inhibitor. Shows insecticidal activity when injected into mealworms. This is Toxin OAIP 5 from Selenotypus plumipes (Australian featherleg tarantula).